The sequence spans 50 residues: Thrombin-like enzyme BpirSP41 (50 aa).

In terms of domain architecture, Peptidase S1 spans 1–50; it reads VVGGDECDINEHPFLAFLYSHGYFCGLTLINQEWVLTAAHCDRRFMRIYL. A disulfide bond links Cys25 and Cys41. His40 (charge relay system) is an active-site residue.

The protein belongs to the peptidase S1 family. Snake venom subfamily. Monomer. N-glycosylated. In terms of tissue distribution, expressed by the venom gland.

The protein resides in the secreted. Inhibited by serine protease inhibitors PMSF, benzamidine, leupeptin and aprotinin, as well as by copper ions (Cu2+). Not inhibited by metalloprotease inhibitors EDTA, EGTA and 1,10-phenanthroline, as well as by barium (Ba2+) and calcium ion (Ca2+). In terms of biological role, snake venom serine protease that interferes with the hemostatic system of the prey. It almost completely degrades both Aalpha (FGA) and Bbeta (FGB) chains of fibrinogen. It presents a higher ability to degrade fibrin clots than BpirSP27. It hydrolyzes chromogenic substrates S-2238 (used for testing thrombin activity), S-2222 (factor Xa), S-2266 (glandular kallikrein and factor XIa), and S-2302 (plasma kallikrein, factor XIa and XIIa). It shows a decrease in the clotting time of human plasma in the presence of increasing doses of the enzyme. Its minimum coagulant dose (MCD) is 20 ug. It promotes platelet aggregation with a maximum of aggregation of 20%, regardless of the concentration increase or the presence of calcium. It also shows 40% inhibition of the hemolytic activity promoted by the complement pathways and possess only a minor role in the induction of edema and pain in rat. The chain is Thrombin-like enzyme BpirSP41 from Bothrops pirajai (Piraja's lancehead).